The following is a 156-amino-acid chain: uncharacterized protein (156 aa).

The next 3 helical transmembrane spans lie at 21–41 (GVLF…AISL), 54–74 (TICS…IDFA), and 80–100 (SVLV…WALF).

It is found in the membrane. This is an uncharacterized protein from Saccharomyces cerevisiae (strain ATCC 204508 / S288c) (Baker's yeast).